The chain runs to 192 residues: Phosphoheptose isomerase (192 aa).

Residues Cys-36 to Ala-192 form the SIS domain. Residue Asn-51–Gly-53 participates in substrate binding. Zn(2+)-binding residues include His-60 and Glu-64. Substrate contacts are provided by residues Glu-64, Asn-93 to Asp-94, Thr-119 to Ser-121, Ser-124, and Gln-171. Zn(2+)-binding residues include Gln-171 and His-179.

The protein belongs to the SIS family. GmhA subfamily. As to quaternary structure, homotetramer. Zn(2+) is required as a cofactor.

It is found in the cytoplasm. The catalysed reaction is 2 D-sedoheptulose 7-phosphate = D-glycero-alpha-D-manno-heptose 7-phosphate + D-glycero-beta-D-manno-heptose 7-phosphate. It functions in the pathway carbohydrate biosynthesis; D-glycero-D-manno-heptose 7-phosphate biosynthesis; D-glycero-alpha-D-manno-heptose 7-phosphate and D-glycero-beta-D-manno-heptose 7-phosphate from sedoheptulose 7-phosphate: step 1/1. Catalyzes the isomerization of sedoheptulose 7-phosphate in D-glycero-D-manno-heptose 7-phosphate. This is Phosphoheptose isomerase from Paramagnetospirillum magneticum (strain ATCC 700264 / AMB-1) (Magnetospirillum magneticum).